A 357-amino-acid chain; its full sequence is MAWEHLRVTDTPTWPSILGRLTTGQNLGTGQAAWAMDQIMTGTATPAQIAGFAVAMKLKRPTSAEVTELADVMLKHARRIPTDIIGNETVDIVGTGGDGANTVNLSTMAAIVVAAAGVPVMKHGNRAASSLSGGADTLEALGVRIDLGPEQVAASVAEVGIGFAFANQFHPSYKHASAVRRELGVPTVFNLLGPLTNPARPRAGLIGCAWAELAEVMAGVFASRNSSVLVVHGDDGLDELTTTTTSTIWRVQAGTVERLTFDPAAFGFQRAHLSELVGGDAEYNAAEVRAVLGGAKGAVRDAVVLNAAGALVAHAGLSSDAKWVPAWEAGLARATETIDSGAAEKLLARWVRFTQKL.

Residues Gly94, 97–98 (GD), Thr102, 104–107 (NLST), 122–130 (KHGNRAASS), and Gly134 contribute to the 5-phospho-alpha-D-ribose 1-diphosphate site. Gly94 is an anthranilate binding site. Position 106 (Ser106) interacts with Mg(2+). Asn125 contributes to the anthranilate binding site. Arg180 is an anthranilate binding site. Mg(2+) contacts are provided by Asp238 and Glu239.

The protein belongs to the anthranilate phosphoribosyltransferase family. As to quaternary structure, homodimer. Mg(2+) serves as cofactor.

It carries out the reaction N-(5-phospho-beta-D-ribosyl)anthranilate + diphosphate = 5-phospho-alpha-D-ribose 1-diphosphate + anthranilate. It participates in amino-acid biosynthesis; L-tryptophan biosynthesis; L-tryptophan from chorismate: step 2/5. Functionally, catalyzes the transfer of the phosphoribosyl group of 5-phosphorylribose-1-pyrophosphate (PRPP) to anthranilate to yield N-(5'-phosphoribosyl)-anthranilate (PRA). The chain is Anthranilate phosphoribosyltransferase from Mycobacterium sp. (strain KMS).